Here is a 500-residue protein sequence, read N- to C-terminus: Glutathione reductase (500 aa).

2 residues coordinate FAD: Ser12 and Gly13. Ser12 contributes to the glutathione binding site. Residue Arg19 participates in glutathione binding. Glu32, Thr39, Cys40, and Lys48 together coordinate FAD. Cys40 and Cys45 form a disulfide bridge. Tyr95 contributes to the glutathione binding site. An FAD-binding site is contributed by Ala111. Residues Ile187, Glu190, Arg207, Arg213, and Gly272 each coordinate NADP(+). FAD is bound by residues Asp312 and Thr354. Arg362 is a glutathione binding site. Residue Val384 coordinates NADP(+). Position 485 (His485) interacts with FAD. The Proton acceptor role is filled by His485.

This sequence belongs to the class-I pyridine nucleotide-disulfide oxidoreductase family. In terms of assembly, homodimer. FAD serves as cofactor.

The protein resides in the cytoplasm. It catalyses the reaction 2 glutathione + NADP(+) = glutathione disulfide + NADPH + H(+). Functionally, catalyzes the reduction of glutathione disulfide (GSSG) to reduced glutathione (GSH). Constitutes the major mechanism to maintain a high GSH:GSSG ratio in the cytosol. In Plasmodium falciparum (isolate K1 / Thailand), this protein is Glutathione reductase.